Consider the following 596-residue polypeptide: Two-component response regulator ARR12 (596 aa).

The Response regulatory domain maps to 18–133 (RVLAVDDDQT…ELKNIWQHVV (116 aa)). Aspartate 69 carries the 4-aspartylphosphate modification. The segment covering 138–153 (DKNRGSNNNGDKRDGS) has biased composition (basic and acidic residues). The disordered stretch occupies residues 138 to 192 (DKNRGSNNNGDKRDGSGNEGVGNSDQNNGKGNRKRKDQYNEDEDEDRDDNDDSCA). The segment covering 158–167 (VGNSDQNNGK) has biased composition (polar residues). Over residues 177 to 189 (NEDEDEDRDDNDD) the composition is skewed to acidic residues. Residues 194–197 (KKQR) carry the Nuclear localization signal motif. The segment at residues 197-247 (RVVWTVELHKKFVAAVNQLGYEKAMPKKILDLMNVEKLTRENVASHLQKFR) is a DNA-binding region (myb-like GARP). The tract at residues 437–467 (NAVSSSTHPPPPAHNSNSINHQFDVSPLPHS) is disordered. Polar residues predominate over residues 450-459 (HNSNSINHQF).

This sequence belongs to the ARR family. Type-B subfamily. As to quaternary structure, binds the target DNA as a monomer. Post-translationally, two-component system major event consists of a His-to-Asp phosphorelay between a sensor histidine kinase (HK) and a response regulator (RR). In plants, the His-to-Asp phosphorelay involves an additional intermediate named Histidine-containing phosphotransfer protein (HPt). This multistep phosphorelay consists of a His-Asp-His-Asp sequential transfer of a phosphate group between first a His and an Asp of the HK protein, followed by the transfer to a conserved His of the HPt protein and finally the transfer to an Asp in the receiver domain of the RR protein. As to expression, detected in the whole plant. Predominantly expressed in leaves. Expressed at the root transition zone.

Its subcellular location is the nucleus. In terms of biological role, transcriptional activator that binds specifically to the DNA sequence 5'-[AG]GATT-3'. Functions as a response regulator involved in His-to-Asp phosphorelay signal transduction system. Phosphorylation of the Asp residue in the receiver domain activates the ability of the protein to promote the transcription of target genes. Could directly activate some type-A response regulators in response to cytokinins. Involved in the root-meristem size determination through the regulation of cell differentiation. Involved in activating SHY2 during meristem growth and controls PIN expression via activation of SHY2. This Arabidopsis thaliana (Mouse-ear cress) protein is Two-component response regulator ARR12 (ARR12).